A 185-amino-acid polypeptide reads, in one-letter code: Cytidylate kinase (185 aa).

8-16 (GPPGSGKTT) serves as a coordination point for ATP.

This sequence belongs to the cytidylate kinase family. Type 2 subfamily.

It is found in the cytoplasm. It carries out the reaction CMP + ATP = CDP + ADP. The catalysed reaction is dCMP + ATP = dCDP + ADP. In Desulfurococcus amylolyticus (strain DSM 18924 / JCM 16383 / VKM B-2413 / 1221n) (Desulfurococcus kamchatkensis), this protein is Cytidylate kinase.